The primary structure comprises 218 residues: Pyridoxine/pyridoxamine 5'-phosphate oxidase (218 aa).

Residues 14–17 and Lys72 contribute to the substrate site; that span reads RREY. Residues 67–72, 82–83, Arg88, Lys89, and Gln111 each bind FMN; these read RIVLLK and YT. Substrate contacts are provided by Tyr129, Arg133, and Ser137. FMN contacts are provided by residues 146–147 and Trp191; that span reads QS. 197–199 is a substrate binding site; it reads RLH. Arg201 serves as a coordination point for FMN.

This sequence belongs to the pyridoxamine 5'-phosphate oxidase family. In terms of assembly, homodimer. FMN serves as cofactor.

The enzyme catalyses pyridoxamine 5'-phosphate + O2 + H2O = pyridoxal 5'-phosphate + H2O2 + NH4(+). It carries out the reaction pyridoxine 5'-phosphate + O2 = pyridoxal 5'-phosphate + H2O2. It participates in cofactor metabolism; pyridoxal 5'-phosphate salvage; pyridoxal 5'-phosphate from pyridoxamine 5'-phosphate: step 1/1. Its pathway is cofactor metabolism; pyridoxal 5'-phosphate salvage; pyridoxal 5'-phosphate from pyridoxine 5'-phosphate: step 1/1. Catalyzes the oxidation of either pyridoxine 5'-phosphate (PNP) or pyridoxamine 5'-phosphate (PMP) into pyridoxal 5'-phosphate (PLP). This is Pyridoxine/pyridoxamine 5'-phosphate oxidase from Escherichia coli (strain SMS-3-5 / SECEC).